The chain runs to 97 residues: Aspartyl/glutamyl-tRNA(Asn/Gln) amidotransferase subunit C (97 aa).

Belongs to the GatC family. In terms of assembly, heterotrimer of A, B and C subunits.

The catalysed reaction is L-glutamyl-tRNA(Gln) + L-glutamine + ATP + H2O = L-glutaminyl-tRNA(Gln) + L-glutamate + ADP + phosphate + H(+). It catalyses the reaction L-aspartyl-tRNA(Asn) + L-glutamine + ATP + H2O = L-asparaginyl-tRNA(Asn) + L-glutamate + ADP + phosphate + 2 H(+). Functionally, allows the formation of correctly charged Asn-tRNA(Asn) or Gln-tRNA(Gln) through the transamidation of misacylated Asp-tRNA(Asn) or Glu-tRNA(Gln) in organisms which lack either or both of asparaginyl-tRNA or glutaminyl-tRNA synthetases. The reaction takes place in the presence of glutamine and ATP through an activated phospho-Asp-tRNA(Asn) or phospho-Glu-tRNA(Gln). The sequence is that of Aspartyl/glutamyl-tRNA(Asn/Gln) amidotransferase subunit C from Synechococcus sp. (strain CC9605).